We begin with the raw amino-acid sequence, 938 residues long: Isoleucine--tRNA ligase (938 aa).

The short motif at 58–68 (PYANGSIHIGH) is the 'HIGH' region element. An N6-acetyllysine modification is found at Lys-183. L-isoleucyl-5'-AMP is bound at residue Glu-561. The 'KMSKS' region signature appears at 602 to 606 (KMSKS). Lys-605 contacts ATP. Zn(2+) is bound by residues Cys-901, Cys-904, Cys-921, and Cys-924.

This sequence belongs to the class-I aminoacyl-tRNA synthetase family. IleS type 1 subfamily. In terms of assembly, monomer. It depends on Zn(2+) as a cofactor.

It is found in the cytoplasm. The catalysed reaction is tRNA(Ile) + L-isoleucine + ATP = L-isoleucyl-tRNA(Ile) + AMP + diphosphate. Functionally, catalyzes the attachment of isoleucine to tRNA(Ile). As IleRS can inadvertently accommodate and process structurally similar amino acids such as valine, to avoid such errors it has two additional distinct tRNA(Ile)-dependent editing activities. One activity is designated as 'pretransfer' editing and involves the hydrolysis of activated Val-AMP. The other activity is designated 'posttransfer' editing and involves deacylation of mischarged Val-tRNA(Ile). This chain is Isoleucine--tRNA ligase, found in Escherichia coli O17:K52:H18 (strain UMN026 / ExPEC).